Reading from the N-terminus, the 110-residue chain is Protein YcgL (110 aa).

The YcgL domain maps to 14-98 (MFCVIYRSSK…PPEDLLKQHL (85 aa)). Residues 88–110 (PPPEDLLKQHLSSVGQNTSHADR) form a disordered region. Polar residues predominate over residues 97 to 110 (HLSSVGQNTSHADR).

The chain is Protein YcgL from Salmonella schwarzengrund (strain CVM19633).